The chain runs to 409 residues: Probable glutaryl-CoA dehydrogenase, mitochondrial (409 aa).

110–111 (RS) is a substrate binding site. FAD is bound by residues 149-152 (FGLT), Ser158, and 184-186 (WIS). Ser158 is a substrate binding site. Substrate is bound by residues 261 to 265 (FGCLN) and Arg268. Glu388 functions as the Proton acceptor in the catalytic mechanism. The FAD site is built by Thr390 and Phe408.

Belongs to the acyl-CoA dehydrogenase family. FAD serves as cofactor.

It is found in the mitochondrion matrix. It catalyses the reaction glutaryl-CoA + oxidized [electron-transfer flavoprotein] + 2 H(+) = (2E)-butenoyl-CoA + reduced [electron-transfer flavoprotein] + CO2. It participates in amino-acid metabolism; lysine degradation. It functions in the pathway amino-acid metabolism; tryptophan metabolism. The sequence is that of Probable glutaryl-CoA dehydrogenase, mitochondrial from Caenorhabditis elegans.